Reading from the N-terminus, the 432-residue chain is Probable exopolygalacturonase C (432 aa).

The signal sequence occupies residues 1–20 (MPISKGIFLSLLSTLPLALA). N-linked (GlcNAc...) asparagine glycosylation is found at Asn-33, Asn-73, Asn-90, and Asn-140. PbH1 repeat units follow at residues 206–227 (GTNIRISDSVMYNGDDAIAVGS) and 229–250 (SHDIVFERNTIGYQSHGMSIGS). Residue Asp-220 is the Proton donor of the active site. His-244 is an active-site residue. Residue Asn-260 is glycosylated (N-linked (GlcNAc...) asparagine). The PbH1 3 repeat unit spans residues 261-282 (ITNLRFEDVTVIDALYAARFKS). N-linked (GlcNAc...) asparagine glycosylation is found at Asn-292 and Asn-302. Cys-377 and Cys-383 are disulfide-bonded. N-linked (GlcNAc...) asparagine glycosylation is present at Asn-407.

Belongs to the glycosyl hydrolase 28 family.

It localises to the secreted. The catalysed reaction is [(1-&gt;4)-alpha-D-galacturonosyl](n) + H2O = alpha-D-galacturonate + [(1-&gt;4)-alpha-D-galacturonosyl](n-1). In terms of biological role, specific in hydrolyzing the terminal glycosidic bond of polygalacturonic acid and oligogalacturonates. This is Probable exopolygalacturonase C (pgxC) from Aspergillus terreus (strain NIH 2624 / FGSC A1156).